A 320-amino-acid chain; its full sequence is Protoheme IX farnesyltransferase (320 aa).

Residues 1 to 24 (MSMITERPVSDPAGQSVSATGDGA) are disordered. The next 8 helical transmembrane spans lie at 33–55 (AVVA…VTTV), 68–88 (LWLM…ASVL), 117–137 (NALI…AVFT), 140–160 (LAAG…TAWL), 183–203 (WAAV…VVFF), 241–261 (ILVF…LGAG), 262–282 (MGPI…VEAH), and 300–320 (FHWS…DALI).

This sequence belongs to the UbiA prenyltransferase family. Protoheme IX farnesyltransferase subfamily.

It localises to the cell membrane. The catalysed reaction is heme b + (2E,6E)-farnesyl diphosphate + H2O = Fe(II)-heme o + diphosphate. The protein operates within porphyrin-containing compound metabolism; heme O biosynthesis; heme O from protoheme: step 1/1. Functionally, converts heme B (protoheme IX) to heme O by substitution of the vinyl group on carbon 2 of heme B porphyrin ring with a hydroxyethyl farnesyl side group. This chain is Protoheme IX farnesyltransferase, found in Salinispora tropica (strain ATCC BAA-916 / DSM 44818 / JCM 13857 / NBRC 105044 / CNB-440).